The sequence spans 495 residues: Aspartyl/glutamyl-tRNA(Asn/Gln) amidotransferase subunit B (495 aa).

It belongs to the GatB/GatE family. GatB subfamily. Heterotrimer of A, B and C subunits.

The catalysed reaction is L-glutamyl-tRNA(Gln) + L-glutamine + ATP + H2O = L-glutaminyl-tRNA(Gln) + L-glutamate + ADP + phosphate + H(+). It carries out the reaction L-aspartyl-tRNA(Asn) + L-glutamine + ATP + H2O = L-asparaginyl-tRNA(Asn) + L-glutamate + ADP + phosphate + 2 H(+). Its function is as follows. Allows the formation of correctly charged Asn-tRNA(Asn) or Gln-tRNA(Gln) through the transamidation of misacylated Asp-tRNA(Asn) or Glu-tRNA(Gln) in organisms which lack either or both of asparaginyl-tRNA or glutaminyl-tRNA synthetases. The reaction takes place in the presence of glutamine and ATP through an activated phospho-Asp-tRNA(Asn) or phospho-Glu-tRNA(Gln). The protein is Aspartyl/glutamyl-tRNA(Asn/Gln) amidotransferase subunit B of Methanosarcina acetivorans (strain ATCC 35395 / DSM 2834 / JCM 12185 / C2A).